We begin with the raw amino-acid sequence, 1460 residues long: Venom prothrombin activator omicarin-C non-catalytic subunit (1460 aa).

A signal peptide spans 1-30 (MGRYSVSPVPKCLLLMFLGWSGLKYYQVNA). Plastocyanin-like domains are found at residues 32 to 196 (QLRE…LLIC), 206 to 330 (AQKF…LNIK), 351 to 529 (MNWE…LLVC), and 539 to 685 (VQNK…FLDA). F5/8 type A domains are found at residues 32-330 (QLRE…LNIK) and 350-685 (IMNW…FLDA). 4 residues coordinate Ca(2+): Lys-124, Glu-139, Asp-142, and Asp-143. An N-linked (GlcNAc...) asparagine glycan is attached at Asn-156. Cys-170 and Cys-196 are joined by a disulfide. 5 N-linked (GlcNAc...) asparagine glycosylation sites follow: Asn-242, Asn-300, Asn-385, Asn-406, and Asn-471. Cys-251 and Cys-332 form a disulfide bridge. An intrachain disulfide couples Cys-503 to Cys-529. Residue Asn-557 is glycosylated (N-linked (GlcNAc...) asparagine). 4 disulfide bridges follow: Cys-672–Cys-1031, Cys-965–Cys-991, Cys-1147–Cys-1298, and Cys-1303–Cys-1457. The b stretch occupies residues 693-817 (GNEEEEEDDG…SDDIAGRYLR (125 aa)). A disordered region spans residues 740 to 760 (LLDDEDNPEQSRSEQTEDDEE). The propeptide at 772 to 817 (SFKGSVAEEELKHTALALEEDAHASDPRIDSNSARNSDDIAGRYLR) is activation peptide (connecting region). Plastocyanin-like domains are found at residues 823 to 991 (NKRR…ILIC) and 1000 to 1143 (NRTI…FTVI). The F5/8 type A 3 domain maps to 823–1143 (NKRRYYIAAE…RGMQALFTVI (321 aa)). 4 residues coordinate Ca(2+): Lys-919, Phe-934, Asp-937, and Asp-938. Residue Asn-943 is glycosylated (N-linked (GlcNAc...) asparagine). Asn-1000, Asn-1180, and Asn-1397 each carry an N-linked (GlcNAc...) asparagine glycan. 2 consecutive F5/8 type C domains span residues 1147–1298 (CKLP…LLGC) and 1303–1457 (CSVP…LFGC).

Belongs to the multicopper oxidase family. As to quaternary structure, heterodimer of a light and a heavy chains; non-disulfide-linked. The interaction between the two chains is calcium-dependent. Found in its active form associated with omicarin-C catalytic subunit (AC Q58L95). In terms of processing, in physiological conditions, blood coagulation factor V and factor Va are inactivated by activated protein C (APC) through proteolytic degradation of the heavy chain. However, omicarin-C non-catalytic subunit (factor V-like protein) retains its full activity even at high concentration of APC. This has two explanations: this protein has only one of the three cleavage sites present in factor V that are targeted by the APC for inactivation, and the binding with the catalytic subunit protect the cleavage site from inactivation. In terms of tissue distribution, expressed by the venom gland.

It localises to the secreted. In terms of biological role, snake prothrombin activator that attacks the hemostatic system of prey. This non-catalytic subunit is functionally similar to blood coagulation factor V. It serves as a critical cofactor for the prothrombinase activity of the catalytic subunit, which is similar to the blood coagulation factor X. The complex converts prothrombin to thrombin by sequential cleavage at two positions, Arg-320 followed by Arg-271. Cleavage at Arg-320 produces an active intermediate known as meizothrombin. Meizothrombin is the 'second' substrate for prothrombinase, and it docks in an altered manner to present the second cleavage site (271). Cleavage at Arg-271 releases active thrombin from its pro-fragment. This order of events is reversed if the protease component of prothrombinase is used on its own, suggesting that the 271 site is inherently more accessible to proteolysis. The protein is Venom prothrombin activator omicarin-C non-catalytic subunit of Oxyuranus microlepidotus (Inland taipan).